A 297-amino-acid polypeptide reads, in one-letter code: MRPPKHLLRTSDLDNSQIETILQQAQTYKDMHHRENLKNKTIITIFFENSTRTLSSFEIAAKRLSADVVRLDVSKSSTTKGESMSDTAANLNAMNPSAIIIRHKNAGAGYYLKFQVSCPIINAGDGAHAHPTQALLDLLTLKEHFDNDLNNLKGKKIAIIGDIVNSRVANSNIELLSRFGMEVILVAPPHFLPSTHLRTCYSLREIAKEVDVFMSLRTQTERHDKQIYGSLKDYASQYCLTPEILSDRDVIVLHPGPVHRNIDIDDEVLKDPRCKVLEQVTNGVCVRMAVLEFCICT.

Arg-52 and Thr-53 together coordinate carbamoyl phosphate. Residue Lys-80 participates in L-aspartate binding. Residues Arg-102, His-130, and Gln-133 each coordinate carbamoyl phosphate. Residues Arg-167 and Arg-217 each contribute to the L-aspartate site. The carbamoyl phosphate site is built by Gly-256 and Pro-257.

This sequence belongs to the aspartate/ornithine carbamoyltransferase superfamily. ATCase family. Heterododecamer (2C3:3R2) of six catalytic PyrB chains organized as two trimers (C3), and six regulatory PyrI chains organized as three dimers (R2).

It catalyses the reaction carbamoyl phosphate + L-aspartate = N-carbamoyl-L-aspartate + phosphate + H(+). It participates in pyrimidine metabolism; UMP biosynthesis via de novo pathway; (S)-dihydroorotate from bicarbonate: step 2/3. In terms of biological role, catalyzes the condensation of carbamoyl phosphate and aspartate to form carbamoyl aspartate and inorganic phosphate, the committed step in the de novo pyrimidine nucleotide biosynthesis pathway. The protein is Aspartate carbamoyltransferase catalytic subunit of Helicobacter hepaticus (strain ATCC 51449 / 3B1).